We begin with the raw amino-acid sequence, 396 residues long: Elongation factor Tu (396 aa).

Residues lysine 10 to glutamate 206 form the tr-type G domain. Residues glycine 19–threonine 26 are G1. Position 19 to 26 (glycine 19 to threonine 26) interacts with GTP. Threonine 26 serves as a coordination point for Mg(2+). The interval glycine 60–asparagine 64 is G2. Residues aspartate 81 to glycine 84 are G3. Residues aspartate 81–histidine 85 and asparagine 136–aspartate 139 each bind GTP. Positions asparagine 136–aspartate 139 are G4. A G5 region spans residues serine 174–lysine 176.

Belongs to the TRAFAC class translation factor GTPase superfamily. Classic translation factor GTPase family. EF-Tu/EF-1A subfamily. Monomer.

The protein resides in the cytoplasm. It carries out the reaction GTP + H2O = GDP + phosphate + H(+). Its function is as follows. GTP hydrolase that promotes the GTP-dependent binding of aminoacyl-tRNA to the A-site of ribosomes during protein biosynthesis. The polypeptide is Elongation factor Tu (Burkholderia vietnamiensis (strain G4 / LMG 22486) (Burkholderia cepacia (strain R1808))).